A 103-amino-acid chain; its full sequence is Interleukin-8 (103 aa).

An N-terminal signal peptide occupies residues Met1–Leu25. Arg27 carries the post-translational modification Citrulline. Intrachain disulfides connect Cys34–Cys61 and Cys36–Cys77.

It belongs to the intercrine alpha (chemokine CxC) family. In terms of assembly, homodimer. Interacts with TNFAIP6 (via Link domain); this interaction interferes with chemokine binding to glycosaminoglycans. Citrullination at Arg-27 prevents proteolysis, and dampens tissue inflammation, it also enhances leukocytosis, possibly through impaired chemokine clearance from the blood circulation. In terms of tissue distribution, alveolar macrophages.

Its subcellular location is the secreted. Its function is as follows. Chemotactic factor that mediates inflammatory response by attracting neutrophils, basophils, and T-cells to clear pathogens and protect the host from infection. Also plays an important role in neutrophil activation. Released in response to an inflammatory stimulus, exerts its effect by binding to the G-protein-coupled receptors CXCR1 and CXCR2, primarily found in neutrophils, monocytes and endothelial cells. G-protein heterotrimer (alpha, beta, gamma subunits) constitutively binds to CXCR1/CXCR2 receptor and activation by IL8 leads to beta and gamma subunits release from Galpha (GNAI2 in neutrophils) and activation of several downstream signaling pathways including PI3K and MAPK pathways. This Sus scrofa (Pig) protein is Interleukin-8 (CXCL8).